The sequence spans 309 residues: GTP cyclohydrolase MptA 2 (309 aa).

It belongs to the GTP cyclohydrolase IV family. In terms of assembly, homodimer. Fe(2+) serves as cofactor.

The catalysed reaction is GTP + H2O = 7,8-dihydroneopterin 2',3'-cyclic phosphate + formate + diphosphate + H(+). The protein operates within cofactor biosynthesis; 5,6,7,8-tetrahydromethanopterin biosynthesis. In terms of biological role, converts GTP to 7,8-dihydro-D-neopterin 2',3'-cyclic phosphate, the first intermediate in the biosynthesis of coenzyme methanopterin. This chain is GTP cyclohydrolase MptA 2, found in Methanocella arvoryzae (strain DSM 22066 / NBRC 105507 / MRE50).